Reading from the N-terminus, the 515-residue chain is Brahma-associated protein of 60 kDa (515 aa).

The segment at 1-124 (MSQRFAPGQA…GGSKSDFATA (124 aa)) is disordered. Positions 17–34 (QPPPPAPGMRPYPPPGAS) are enriched in pro residues. Positions 49-62 (PVPGTANVAGVPGV) are enriched in low complexity. The segment covering 90–103 (TGAGGGGVGSGGGS) has biased composition (gly residues). Residues 116-204 (GSKSDFATAK…SKEPTNDGEE (89 aa)) form a DNA-binding region. The SWIB/MDM2 domain maps to 291 to 368 (YQPLQFKLDP…PQRLNPLLHP (78 aa)).

There are 2 distinct Brahma complexes in the fruit fly, the Brahma-associated proteins (BAP) and Polybromo-containing BAP (PBAP) complexes, which are composed of common subunits Brm, Mor, Snr1/Bap45, Bap111/Dalo, Bap55, Bap60 and Act42A/Bap47, and additional signature subunits osa in the BAP complex and Polybromo and Bap170 in the PBAP complex. Interacts with sisA and sc. Interacts with mor. Interacts with p53. Interacts with erm (via N-terminal). Interacts with akirin; interaction is immune stimulation-dependent; activates selected Rel target gene promoters.

Involved in the recruitment and site-specific anchoring of the Brahma complex at specific promoter sites. The Brahma complex is a multiprotein complex which is the equivalent of the yeast SWI/SNF complex and acts by remodeling the chromatin by catalyzing an ATP-dependent alteration in the structure of nucleosomal DNA. This complex can both serve as a transcriptional coactivator or corepressor, depending on the context. Participates in X-chromosomal dosage compensation. Participates in neurogenesis. The sequence is that of Brahma-associated protein of 60 kDa (Bap60) from Drosophila melanogaster (Fruit fly).